The primary structure comprises 152 residues: Deoxyuridine 5'-triphosphate nucleotidohydrolase (152 aa).

Residues 72–74 (RSG), Asn-85, and 89–91 (TID) contribute to the substrate site.

The protein belongs to the dUTPase family. Mg(2+) serves as cofactor.

The enzyme catalyses dUTP + H2O = dUMP + diphosphate + H(+). It participates in pyrimidine metabolism; dUMP biosynthesis; dUMP from dCTP (dUTP route): step 2/2. In terms of biological role, this enzyme is involved in nucleotide metabolism: it produces dUMP, the immediate precursor of thymidine nucleotides and it decreases the intracellular concentration of dUTP so that uracil cannot be incorporated into DNA. This is Deoxyuridine 5'-triphosphate nucleotidohydrolase from Bradyrhizobium sp. (strain ORS 278).